The following is a 247-amino-acid chain: Probable transcriptional regulatory protein lpp1249 (247 aa).

This sequence belongs to the TACO1 family.

The protein localises to the cytoplasm. The chain is Probable transcriptional regulatory protein lpp1249 from Legionella pneumophila (strain Paris).